Here is a 417-residue protein sequence, read N- to C-terminus: Serine hydroxymethyltransferase (417 aa).

Residues leucine 121 and 125 to 127 (GHL) each bind (6S)-5,6,7,8-tetrahydrofolate. N6-(pyridoxal phosphate)lysine is present on lysine 230. 355–357 (SPF) lines the (6S)-5,6,7,8-tetrahydrofolate pocket.

This sequence belongs to the SHMT family. In terms of assembly, homodimer. It depends on pyridoxal 5'-phosphate as a cofactor.

Its subcellular location is the cytoplasm. It carries out the reaction (6R)-5,10-methylene-5,6,7,8-tetrahydrofolate + glycine + H2O = (6S)-5,6,7,8-tetrahydrofolate + L-serine. Its pathway is one-carbon metabolism; tetrahydrofolate interconversion. It functions in the pathway amino-acid biosynthesis; glycine biosynthesis; glycine from L-serine: step 1/1. Its function is as follows. Catalyzes the reversible interconversion of serine and glycine with tetrahydrofolate (THF) serving as the one-carbon carrier. This reaction serves as the major source of one-carbon groups required for the biosynthesis of purines, thymidylate, methionine, and other important biomolecules. Also exhibits THF-independent aldolase activity toward beta-hydroxyamino acids, producing glycine and aldehydes, via a retro-aldol mechanism. This Ruthia magnifica subsp. Calyptogena magnifica protein is Serine hydroxymethyltransferase.